The primary structure comprises 101 residues: Large ribosomal subunit protein uL23 (101 aa).

This sequence belongs to the universal ribosomal protein uL23 family. Part of the 50S ribosomal subunit. Contacts protein L29, and trigger factor when it is bound to the ribosome.

One of the early assembly proteins it binds 23S rRNA. One of the proteins that surrounds the polypeptide exit tunnel on the outside of the ribosome. Forms the main docking site for trigger factor binding to the ribosome. This Aromatoleum aromaticum (strain DSM 19018 / LMG 30748 / EbN1) (Azoarcus sp. (strain EbN1)) protein is Large ribosomal subunit protein uL23.